Consider the following 275-residue polypeptide: tRNA (guanine-N(1)-)-methyltransferase (275 aa).

S-adenosyl-L-methionine contacts are provided by residues Gly-139 and 159-164 (IGDYIL).

The protein belongs to the RNA methyltransferase TrmD family. In terms of assembly, homodimer.

It localises to the cytoplasm. The enzyme catalyses guanosine(37) in tRNA + S-adenosyl-L-methionine = N(1)-methylguanosine(37) in tRNA + S-adenosyl-L-homocysteine + H(+). In terms of biological role, specifically methylates guanosine-37 in various tRNAs. The polypeptide is tRNA (guanine-N(1)-)-methyltransferase (Lachnoclostridium phytofermentans (strain ATCC 700394 / DSM 18823 / ISDg) (Clostridium phytofermentans)).